We begin with the raw amino-acid sequence, 448 residues long: UDP-N-acetylmuramoylalanine--D-glutamate ligase (448 aa).

116-122 (GSNAKST) lines the ATP pocket.

This sequence belongs to the MurCDEF family.

It is found in the cytoplasm. It carries out the reaction UDP-N-acetyl-alpha-D-muramoyl-L-alanine + D-glutamate + ATP = UDP-N-acetyl-alpha-D-muramoyl-L-alanyl-D-glutamate + ADP + phosphate + H(+). It participates in cell wall biogenesis; peptidoglycan biosynthesis. Functionally, cell wall formation. Catalyzes the addition of glutamate to the nucleotide precursor UDP-N-acetylmuramoyl-L-alanine (UMA). In Pseudomonas fluorescens (strain ATCC BAA-477 / NRRL B-23932 / Pf-5), this protein is UDP-N-acetylmuramoylalanine--D-glutamate ligase.